The chain runs to 502 residues: MSKVTGKVSQIIGPVIDVEFQAGVDLPKIYDSLEIKKADGSILVLEVQSHIGENTVRTISMDSSDGLSRGAEVNATGSAIQMPVGDDVYGRLFNVIGDAIDGLGNLPKSGKDGLPIHREAPKFEDLSTSTEVLFTGIKVIDLIEPYAKGGKIGLFGGAGVGKTVLIQELINNIAKGHGGLSVFAGVGERTREGNDLLREMLESGIIKYGDDFMHSMEEGGWDLSKVDKSVMKDSKATFVFGQMNEPPGARARVALSGLTIAEYFRDGAGEGQGKDVLFFVDNIFRFTQAGSEVSALLGRMPSAVGYQPTLATEMGAMQERITSTKRGSITSVQAVYVPADDLTDPAPATTFAHLDATTVLSRKIAELGIYPAVDPLDSTSRILAPEILGKDHYSCAQRVKELLQRYKELQDIIAILGMEELSEEDKMAVGRARRVQRFLSQPFHVAEQFTGLKGVLVDIKDTIKGFNMIMDGELDHLPESAFNLKGTIEEAIEAGEKMLAEA.

Position 156 to 163 (156 to 163 (GGAGVGKT)) interacts with ATP.

This sequence belongs to the ATPase alpha/beta chains family. F-type ATPases have 2 components, CF(1) - the catalytic core - and CF(0) - the membrane proton channel. CF(1) has five subunits: alpha(3), beta(3), gamma(1), delta(1), epsilon(1). CF(0) has three main subunits: a(1), b(2) and c(9-12). The alpha and beta chains form an alternating ring which encloses part of the gamma chain. CF(1) is attached to CF(0) by a central stalk formed by the gamma and epsilon chains, while a peripheral stalk is formed by the delta and b chains.

Its subcellular location is the cell membrane. It carries out the reaction ATP + H2O + 4 H(+)(in) = ADP + phosphate + 5 H(+)(out). Its function is as follows. Produces ATP from ADP in the presence of a proton gradient across the membrane. The catalytic sites are hosted primarily by the beta subunits. The protein is ATP synthase subunit beta of Cellulophaga lytica (Cytophaga lytica).